We begin with the raw amino-acid sequence, 125 residues long: Ribonuclease P protein component (125 aa).

Belongs to the RnpA family. As to quaternary structure, consists of a catalytic RNA component (M1 or rnpB) and a protein subunit.

It carries out the reaction Endonucleolytic cleavage of RNA, removing 5'-extranucleotides from tRNA precursor.. Functionally, RNaseP catalyzes the removal of the 5'-leader sequence from pre-tRNA to produce the mature 5'-terminus. It can also cleave other RNA substrates such as 4.5S RNA. The protein component plays an auxiliary but essential role in vivo by binding to the 5'-leader sequence and broadening the substrate specificity of the ribozyme. This chain is Ribonuclease P protein component, found in Clostridium beijerinckii (strain ATCC 51743 / NCIMB 8052) (Clostridium acetobutylicum).